The primary structure comprises 503 residues: Probable apyrase 4 (503 aa).

Positions 1-14 are enriched in low complexity; the sequence is MQRSNARSRSNINS. The tract at residues 1 to 39 is disordered; that stretch reads MQRSNARSRSNINSDMVDPPEVQTSPGNHRSSPSTAAKP. Residues 1-45 lie on the Cytoplasmic side of the membrane; that stretch reads MQRSNARSRSNINSDMVDPPEVQTSPGNHRSSPSTAAKPKSKRTK. The helical; Signal-anchor for type II membrane protein transmembrane segment at 46 to 66 threads the bilayer; sequence SIIFVIVACVTIALGLLFIGY. Topologically, residues 67-503 are extracellular; the sequence is SILRSGRNRR…DLSNVAKYKI (437 aa). 83–93 provides a ligand contact to ATP; that stretch reads VIIDGGSSGTR. E206 acts as the Proton acceptor in catalysis. ATP is bound at residue 230–240; it reads GIVELGGASAQ. 3 N-linked (GlcNAc...) asparagine glycosylation sites follow: N261, N293, and N338.

The protein belongs to the GDA1/CD39 NTPase family. Requires Ca(2+) as cofactor. As to expression, expressed both in the primary root and lateral root but not in the rosette leaves.

The protein resides in the membrane. The enzyme catalyses a ribonucleoside 5'-triphosphate + 2 H2O = a ribonucleoside 5'-phosphate + 2 phosphate + 2 H(+). Its function is as follows. Catalyzes the hydrolysis of phosphoanhydride bonds of nucleoside tri- and di-phosphates. This chain is Probable apyrase 4 (APY4), found in Arabidopsis thaliana (Mouse-ear cress).